The sequence spans 101 residues: Phosphoribosyl-AMP cyclohydrolase (101 aa).

Aspartate 71 contacts Mg(2+). Cysteine 72 is a binding site for Zn(2+). Residues aspartate 73 and aspartate 75 each coordinate Mg(2+). Zn(2+) is bound by residues cysteine 88 and cysteine 95.

This sequence belongs to the PRA-CH family. As to quaternary structure, homodimer. Mg(2+) is required as a cofactor. The cofactor is Zn(2+).

Its subcellular location is the cytoplasm. The catalysed reaction is 1-(5-phospho-beta-D-ribosyl)-5'-AMP + H2O = 1-(5-phospho-beta-D-ribosyl)-5-[(5-phospho-beta-D-ribosylamino)methylideneamino]imidazole-4-carboxamide. It functions in the pathway amino-acid biosynthesis; L-histidine biosynthesis; L-histidine from 5-phospho-alpha-D-ribose 1-diphosphate: step 3/9. Catalyzes the hydrolysis of the adenine ring of phosphoribosyl-AMP. This is Phosphoribosyl-AMP cyclohydrolase from Bacillus cereus (strain Q1).